A 403-amino-acid chain; its full sequence is Phosphopentomutase (403 aa).

Residues aspartate 13, aspartate 298, histidine 303, aspartate 339, histidine 340, and histidine 351 each contribute to the Mn(2+) site.

The protein belongs to the phosphopentomutase family. Mn(2+) is required as a cofactor.

The protein resides in the cytoplasm. The catalysed reaction is 2-deoxy-alpha-D-ribose 1-phosphate = 2-deoxy-D-ribose 5-phosphate. It catalyses the reaction alpha-D-ribose 1-phosphate = D-ribose 5-phosphate. The protein operates within carbohydrate degradation; 2-deoxy-D-ribose 1-phosphate degradation; D-glyceraldehyde 3-phosphate and acetaldehyde from 2-deoxy-alpha-D-ribose 1-phosphate: step 1/2. Its function is as follows. Isomerase that catalyzes the conversion of deoxy-ribose 1-phosphate (dRib-1-P) and ribose 1-phosphate (Rib-1-P) to deoxy-ribose 5-phosphate (dRib-5-P) and ribose 5-phosphate (Rib-5-P), respectively. In Streptococcus pyogenes serotype M18 (strain MGAS8232), this protein is Phosphopentomutase.